A 282-amino-acid chain; its full sequence is Large ribosomal subunit protein uL4c (282 aa).

Residues 1-43 constitute a chloroplast transit peptide; it reads MAASLSFFSSSIFLSNPNIQSSKHLLFRSPKQLSVAAIATIRS. 2 disordered regions span residues 86-133 and 251-282; these read RNQR…GGVV and RYGD…ESSE. The span at 255–282 shows a compositional bias: acidic residues; the sequence is ENEWEDEEEDDQEDNDGGEAEESTESSE.

This sequence belongs to the universal ribosomal protein uL4 family. In terms of assembly, part of the 50S ribosomal subunit.

It localises to the plastid. The protein resides in the chloroplast. Its function is as follows. This protein binds directly and specifically to 23S rRNA. May play a role in plastid transcriptional regulation. The chain is Large ribosomal subunit protein uL4c (RPL4) from Nicotiana tabacum (Common tobacco).